We begin with the raw amino-acid sequence, 124 residues long: Small ribosomal subunit protein uS12 (124 aa).

The residue at position 89 (Asp89) is a 3-methylthioaspartic acid. The disordered stretch occupies residues 104-124; sequence TAGVKDRRQSRSKYGAKAPKE.

The protein belongs to the universal ribosomal protein uS12 family. In terms of assembly, part of the 30S ribosomal subunit. Contacts proteins S8 and S17. May interact with IF1 in the 30S initiation complex.

Functionally, with S4 and S5 plays an important role in translational accuracy. In terms of biological role, interacts with and stabilizes bases of the 16S rRNA that are involved in tRNA selection in the A site and with the mRNA backbone. Located at the interface of the 30S and 50S subunits, it traverses the body of the 30S subunit contacting proteins on the other side and probably holding the rRNA structure together. The combined cluster of proteins S8, S12 and S17 appears to hold together the shoulder and platform of the 30S subunit. The polypeptide is Small ribosomal subunit protein uS12 (Synechococcus sp. (strain CC9605)).